Here is a 150-residue protein sequence, read N- to C-terminus: Heat shock protein beta-3 (150 aa).

The region spanning 47–150 (KTRAAQSPPV…VEVKDPVGTK (104 aa)) is the sHSP domain.

It belongs to the small heat shock protein (HSP20) family.

It is found in the cytoplasm. The protein localises to the nucleus. Functionally, inhibitor of actin polymerization. The sequence is that of Heat shock protein beta-3 (HSPB3) from Homo sapiens (Human).